The chain runs to 455 residues: Argininosuccinate lyase (455 aa).

Belongs to the lyase 1 family. Argininosuccinate lyase subfamily.

It is found in the cytoplasm. The enzyme catalyses 2-(N(omega)-L-arginino)succinate = fumarate + L-arginine. It functions in the pathway amino-acid biosynthesis; L-arginine biosynthesis; L-arginine from L-ornithine and carbamoyl phosphate: step 3/3. This chain is Argininosuccinate lyase, found in Shewanella baltica (strain OS155 / ATCC BAA-1091).